The chain runs to 365 residues: 3-dehydroquinate synthase (365 aa).

Residues aspartate 75–lysine 80, glycine 109–aspartate 113, threonine 133–threonine 134, lysine 146, and lysine 155 each bind NAD(+). The Zn(2+) site is built by glutamate 188, histidine 253, and histidine 269.

The protein belongs to the sugar phosphate cyclases superfamily. Dehydroquinate synthase family. Co(2+) serves as cofactor. The cofactor is Zn(2+). Requires NAD(+) as cofactor.

It is found in the cytoplasm. The enzyme catalyses 7-phospho-2-dehydro-3-deoxy-D-arabino-heptonate = 3-dehydroquinate + phosphate. Its pathway is metabolic intermediate biosynthesis; chorismate biosynthesis; chorismate from D-erythrose 4-phosphate and phosphoenolpyruvate: step 2/7. In terms of biological role, catalyzes the conversion of 3-deoxy-D-arabino-heptulosonate 7-phosphate (DAHP) to dehydroquinate (DHQ). The sequence is that of 3-dehydroquinate synthase from Corynebacterium glutamicum (strain R).